The following is a 341-amino-acid chain: Anthranilate phosphoribosyltransferase (341 aa).

Residues glycine 83, 86–87 (GD), threonine 91, 93–96 (NIST), 111–119 (KHGNRGVSS), and serine 123 contribute to the 5-phospho-alpha-D-ribose 1-diphosphate site. Anthranilate is bound at residue glycine 83. Serine 95 is a binding site for Mg(2+). Position 114 (asparagine 114) interacts with anthranilate. Arginine 169 is a binding site for anthranilate. Aspartate 228 and glutamate 229 together coordinate Mg(2+).

This sequence belongs to the anthranilate phosphoribosyltransferase family. As to quaternary structure, homodimer. It depends on Mg(2+) as a cofactor.

It catalyses the reaction N-(5-phospho-beta-D-ribosyl)anthranilate + diphosphate = 5-phospho-alpha-D-ribose 1-diphosphate + anthranilate. It functions in the pathway amino-acid biosynthesis; L-tryptophan biosynthesis; L-tryptophan from chorismate: step 2/5. In terms of biological role, catalyzes the transfer of the phosphoribosyl group of 5-phosphorylribose-1-pyrophosphate (PRPP) to anthranilate to yield N-(5'-phosphoribosyl)-anthranilate (PRA). In Cupriavidus necator (strain ATCC 17699 / DSM 428 / KCTC 22496 / NCIMB 10442 / H16 / Stanier 337) (Ralstonia eutropha), this protein is Anthranilate phosphoribosyltransferase.